A 29-amino-acid polypeptide reads, in one-letter code: Cytochrome b6-f complex subunit 8 (29 aa).

Residues 3 to 23 (IVSLAWAALMVVFTFSLSLVV) form a helical membrane-spanning segment.

Belongs to the PetN family. As to quaternary structure, the 4 large subunits of the cytochrome b6-f complex are cytochrome b6, subunit IV (17 kDa polypeptide, PetD), cytochrome f and the Rieske protein, while the 4 small subunits are PetG, PetL, PetM and PetN. The complex functions as a dimer.

Its subcellular location is the plastid. It localises to the chloroplast thylakoid membrane. Component of the cytochrome b6-f complex, which mediates electron transfer between photosystem II (PSII) and photosystem I (PSI), cyclic electron flow around PSI, and state transitions. This Solanum bulbocastanum (Wild potato) protein is Cytochrome b6-f complex subunit 8.